The following is a 1204-amino-acid chain: ATP-dependent helicase/nuclease subunit A (1204 aa).

Residues 2–472 (PQFTKEQEKA…ILLSDNFRST (471 aa)) form the UvrD-like helicase ATP-binding domain. 23 to 30 (ASAGSGKT) contacts ATP. Positions 500-783 (GQLIFGAKYY…RLMTIHGSKG (284 aa)) constitute a UvrD-like helicase C-terminal domain.

The protein belongs to the helicase family. AddA subfamily. In terms of assembly, heterodimer of AddA and AddB/RexB. It depends on Mg(2+) as a cofactor.

The catalysed reaction is Couples ATP hydrolysis with the unwinding of duplex DNA by translocating in the 3'-5' direction.. The enzyme catalyses ATP + H2O = ADP + phosphate + H(+). Functionally, the heterodimer acts as both an ATP-dependent DNA helicase and an ATP-dependent, dual-direction single-stranded exonuclease. Recognizes the chi site generating a DNA molecule suitable for the initiation of homologous recombination. The AddA nuclease domain is required for chi fragment generation; this subunit has the helicase and 3' -&gt; 5' nuclease activities. The sequence is that of ATP-dependent helicase/nuclease subunit A from Lactobacillus helveticus (strain DPC 4571).